The following is a 191-amino-acid chain: 3-isopropylmalate dehydratase small subunit (191 aa).

It belongs to the LeuD family. LeuD type 1 subfamily. Heterodimer of LeuC and LeuD.

The enzyme catalyses (2R,3S)-3-isopropylmalate = (2S)-2-isopropylmalate. The protein operates within amino-acid biosynthesis; L-leucine biosynthesis; L-leucine from 3-methyl-2-oxobutanoate: step 2/4. Functionally, catalyzes the isomerization between 2-isopropylmalate and 3-isopropylmalate, via the formation of 2-isopropylmaleate. The protein is 3-isopropylmalate dehydratase small subunit of Anaeromyxobacter dehalogenans (strain 2CP-C).